Here is a 295-residue protein sequence, read N- to C-terminus: Ribosomal RNA small subunit methyltransferase A (295 aa).

6 residues coordinate S-adenosyl-L-methionine: Asn-29, Leu-31, Gly-56, Glu-77, Asp-102, and Asn-127.

This sequence belongs to the class I-like SAM-binding methyltransferase superfamily. rRNA adenine N(6)-methyltransferase family. RsmA subfamily.

It localises to the cytoplasm. It carries out the reaction adenosine(1518)/adenosine(1519) in 16S rRNA + 4 S-adenosyl-L-methionine = N(6)-dimethyladenosine(1518)/N(6)-dimethyladenosine(1519) in 16S rRNA + 4 S-adenosyl-L-homocysteine + 4 H(+). Functionally, specifically dimethylates two adjacent adenosines (A1518 and A1519) in the loop of a conserved hairpin near the 3'-end of 16S rRNA in the 30S particle. May play a critical role in biogenesis of 30S subunits. This is Ribosomal RNA small subunit methyltransferase A from Anoxybacillus flavithermus (strain DSM 21510 / WK1).